The sequence spans 359 residues: Elongation factor Ts 1, mitochondrial (359 aa).

The span at 323–341 shows a compositional bias: low complexity; it reads GKAAPAPKAEEPAAVAPAK. Positions 323–345 are disordered; the sequence is GKAAPAPKAEEPAAVAPAKADAE.

It belongs to the EF-Ts family.

It is found in the mitochondrion. Its function is as follows. Associates with the EF-Tu.GDP complex and induces the exchange of GDP to GTP. It remains bound to the aminoacyl-tRNA.EF-Tu.GTP complex up to the GTP hydrolysis stage on the ribosome. In Thalassiosira pseudonana (Marine diatom), this protein is Elongation factor Ts 1, mitochondrial.